The sequence spans 347 residues: Protein RecA (347 aa).

ATP is bound at residue 70–77 (GPESSGKT).

The protein belongs to the RecA family.

The protein localises to the cytoplasm. In terms of biological role, can catalyze the hydrolysis of ATP in the presence of single-stranded DNA, the ATP-dependent uptake of single-stranded DNA by duplex DNA, and the ATP-dependent hybridization of homologous single-stranded DNAs. It interacts with LexA causing its activation and leading to its autocatalytic cleavage. This is Protein RecA from Ruegeria pomeroyi (strain ATCC 700808 / DSM 15171 / DSS-3) (Silicibacter pomeroyi).